Consider the following 319-residue polypeptide: D-alanine--D-alanine ligase B (319 aa).

Residues 117-312 enclose the ATP-grasp domain; sequence KRVWLSLGLP…FQQLVLAILA (196 aa). Residue 143-198 coordinates ATP; that stretch reads AQRLGFPLIVKPAHEGSSIGMAKVGGLDELIAAWREAARYDSQVLVEQWISGPEFT. Residues Asp266, Glu279, and Asn281 each coordinate Mg(2+).

It belongs to the D-alanine--D-alanine ligase family. Mg(2+) is required as a cofactor. The cofactor is Mn(2+).

The protein resides in the cytoplasm. The enzyme catalyses 2 D-alanine + ATP = D-alanyl-D-alanine + ADP + phosphate + H(+). It functions in the pathway cell wall biogenesis; peptidoglycan biosynthesis. In terms of biological role, cell wall formation. In Pseudomonas aeruginosa (strain ATCC 15692 / DSM 22644 / CIP 104116 / JCM 14847 / LMG 12228 / 1C / PRS 101 / PAO1), this protein is D-alanine--D-alanine ligase B.